Here is a 215-residue protein sequence, read N- to C-terminus: E3 ubiquitin-protein ligase znrf1 (215 aa).

Disordered stretches follow at residues Met1–Thr39 and Tyr66–Gly96. A lipid anchor (N-myristoyl glycine) is attached at Gly2. An RING-type; atypical zinc finger spans residues Cys172–Pro213.

It localises to the endosome. The protein localises to the lysosome. Its subcellular location is the membrane. The catalysed reaction is S-ubiquitinyl-[E2 ubiquitin-conjugating enzyme]-L-cysteine + [acceptor protein]-L-lysine = [E2 ubiquitin-conjugating enzyme]-L-cysteine + N(6)-ubiquitinyl-[acceptor protein]-L-lysine.. It functions in the pathway protein modification; protein ubiquitination. Functionally, E3 ubiquitin-protein ligase that plays a role in neuron cells differentiation. Plays a role in the establishment and maintenance of neuronal transmission and plasticity. The sequence is that of E3 ubiquitin-protein ligase znrf1 (znrf1) from Danio rerio (Zebrafish).